Reading from the N-terminus, the 235-residue chain is Elongation factor Tu (235 aa).

The tr-type G domain occupies 1–125; the sequence is KNMITGAAQM…QVDEYIPAPE (125 aa). A GTP-binding site is contributed by 47-50; it reads NKQD.

This sequence belongs to the TRAFAC class translation factor GTPase superfamily. Classic translation factor GTPase family. EF-Tu/EF-1A subfamily. Monomer.

The protein resides in the cytoplasm. The enzyme catalyses GTP + H2O = GDP + phosphate + H(+). Functionally, GTP hydrolase that promotes the GTP-dependent binding of aminoacyl-tRNA to the A-site of ribosomes during protein biosynthesis. This Leptolyngbya ectocarpi (Phormidium ectocarpi) protein is Elongation factor Tu (tufA).